Reading from the N-terminus, the 495-residue chain is Lanosterol 14-alpha demethylase erg11 (495 aa).

Residues 2–22 form a helical membrane-spanning segment; it reads AFSLVSILLSIALAWYVGYII. Cys-442 contributes to the heme binding site.

Belongs to the cytochrome P450 family. In terms of assembly, interacts with dap1. Requires heme as cofactor.

The protein resides in the endoplasmic reticulum. It localises to the membrane. It carries out the reaction a 14alpha-methyl steroid + 3 reduced [NADPH--hemoprotein reductase] + 3 O2 = a Delta(14) steroid + formate + 3 oxidized [NADPH--hemoprotein reductase] + 4 H2O + 4 H(+). It catalyses the reaction a 14alpha-methyl steroid + reduced [NADPH--hemoprotein reductase] + O2 = a 14alpha-hydroxymethyl steroid + oxidized [NADPH--hemoprotein reductase] + H2O + H(+). The catalysed reaction is a 14alpha-hydroxymethyl steroid + reduced [NADPH--hemoprotein reductase] + O2 = a 14alpha-formyl steroid + oxidized [NADPH--hemoprotein reductase] + 2 H2O + H(+). The enzyme catalyses a 14alpha-formyl steroid + reduced [NADPH--hemoprotein reductase] + O2 = a Delta(14) steroid + formate + oxidized [NADPH--hemoprotein reductase] + H2O + 2 H(+). It carries out the reaction lanosterol + 3 reduced [NADPH--hemoprotein reductase] + 3 O2 = 4,4-dimethyl-5alpha-cholesta-8,14,24-trien-3beta-ol + formate + 3 oxidized [NADPH--hemoprotein reductase] + 4 H2O + 4 H(+). It catalyses the reaction lanosterol + reduced [NADPH--hemoprotein reductase] + O2 = 32-hydroxylanosterol + oxidized [NADPH--hemoprotein reductase] + H2O + H(+). The catalysed reaction is 32-hydroxylanosterol + reduced [NADPH--hemoprotein reductase] + O2 = 32-oxolanosterol + oxidized [NADPH--hemoprotein reductase] + 2 H2O + H(+). The enzyme catalyses 32-oxolanosterol + reduced [NADPH--hemoprotein reductase] + O2 = 4,4-dimethyl-5alpha-cholesta-8,14,24-trien-3beta-ol + formate + oxidized [NADPH--hemoprotein reductase] + H2O + 2 H(+). It carries out the reaction eburicol + 3 reduced [NADPH--hemoprotein reductase] + 3 O2 = 14-demethyleburicol + formate + 3 oxidized [NADPH--hemoprotein reductase] + 4 H2O + 4 H(+). It catalyses the reaction eburicol + reduced [NADPH--hemoprotein reductase] + O2 = 32-hydroxyeburicol + oxidized [NADPH--hemoprotein reductase] + H2O + H(+). The catalysed reaction is 32-hydroxyeburicol + reduced [NADPH--hemoprotein reductase] + O2 = 32-oxoeburicol + oxidized [NADPH--hemoprotein reductase] + 2 H2O + H(+). The enzyme catalyses 32-oxoeburicol + reduced [NADPH--hemoprotein reductase] + O2 = 14-demethyleburicol + formate + oxidized [NADPH--hemoprotein reductase] + H2O + 2 H(+). It functions in the pathway steroid biosynthesis; zymosterol biosynthesis; zymosterol from lanosterol: step 1/6. The protein operates within steroid metabolism; ergosterol biosynthesis. Functionally, sterol 14alpha-demethylase that plays a critical role in the third module of ergosterol biosynthesis pathway, being ergosterol the major sterol component in fungal membranes that participates in a variety of functions. The third module or late pathway involves the ergosterol synthesis itself through consecutive reactions that mainly occur in the endoplasmic reticulum (ER) membrane. In filamentous fungi, during the initial step of this module, lanosterol (lanosta-8,24-dien-3beta-ol) can be metabolized to eburicol. Sterol 14alpha-demethylase catalyzes the three-step oxidative removal of the 14alpha-methyl group (C-32) of both these sterols in the form of formate, and converts eburicol and lanosterol to 14-demethyleburicol (4,4,24-trimethylergosta-8,14,24(28)-trienol) and 4,4-dimethyl-5alpha-cholesta-8,14,24-trien-3beta-ol, respectively, which are further metabolized by other enzymes in the pathway to ergosterol. Can also use substrates not intrinsic to fungi, such as 24,25-dihydrolanosterol (DHL), producing 4,4-dimethyl-8,14-cholestadien-3-beta-ol, but at lower rates than the endogenous substrates. This Schizosaccharomyces pombe (strain 972 / ATCC 24843) (Fission yeast) protein is Lanosterol 14-alpha demethylase erg11.